The following is a 307-amino-acid chain: 1-aminocyclopropane-1-carboxylate oxidase 5 (307 aa).

Positions 106–134 (SNIKETMGEYREEVRKLASKMMEVMDENL) form a coiled coil. A Fe2OG dioxygenase domain is found at 152–256 (GEETAFFGTK…RRSIASFYNP (105 aa)). Fe cation is bound by residues His-180, Asp-182, and His-237. Arg-247 contributes to the 2-oxoglutarate binding site.

Belongs to the iron/ascorbate-dependent oxidoreductase family. The cofactor is Fe(2+).

The catalysed reaction is 1-aminocyclopropane-1-carboxylate + L-ascorbate + O2 = ethene + L-dehydroascorbate + hydrogen cyanide + CO2 + 2 H2O. The protein operates within alkene biosynthesis; ethylene biosynthesis via S-adenosyl-L-methionine; ethylene from S-adenosyl-L-methionine: step 2/2. In terms of biological role, enzyme involved in the ethylene biosynthesis. The protein is 1-aminocyclopropane-1-carboxylate oxidase 5 of Arabidopsis thaliana (Mouse-ear cress).